We begin with the raw amino-acid sequence, 586 residues long: Monoterpene synthase TPS4, chloroplastic (586 aa).

A chloroplast-targeting transit peptide spans 1–47; that stretch reads MAATRNLSLLAQSSQPWAGIYGSHGSPRPISSWLRRQSIAKTSYICM. Positions 340, 344, 485, 489, and 493 each coordinate Mg(2+). The DDXXD motif motif lies at 340-344; that stretch reads DDIFD.

It belongs to the terpene synthase family. Tpsg subfamily. In terms of assembly, monomer. Requires Mg(2+) as cofactor.

The protein localises to the plastid. Its subcellular location is the chloroplast. It catalyses the reaction (2E)-geranyl diphosphate + H2O = (2E)-geraniol + diphosphate. It participates in secondary metabolite biosynthesis; terpenoid biosynthesis. In terms of biological role, monoterpene synthase involved in the biosynthesis of volatile organic compounds. Mediates the conversion of (2E)-geranyl diphosphate (GPP) into the acyclic monoterpene, geraniol. Does not use (2E,6E)-farnesyl diphosphate (FPP) as substrate. The protein is Monoterpene synthase TPS4, chloroplastic of Cananga odorata (Ylang-ylang tree).